We begin with the raw amino-acid sequence, 232 residues long: Large ribosomal subunit protein uL1 (232 aa).

This sequence belongs to the universal ribosomal protein uL1 family. In terms of assembly, part of the 50S ribosomal subunit.

In terms of biological role, binds directly to 23S rRNA. The L1 stalk is quite mobile in the ribosome, and is involved in E site tRNA release. Functionally, protein L1 is also a translational repressor protein, it controls the translation of the L11 operon by binding to its mRNA. The polypeptide is Large ribosomal subunit protein uL1 (Bacillus velezensis (strain DSM 23117 / BGSC 10A6 / LMG 26770 / FZB42) (Bacillus amyloliquefaciens subsp. plantarum)).